Here is a 466-residue protein sequence, read N- to C-terminus: 3-isopropylmalate dehydratase large subunit (466 aa).

3 residues coordinate [4Fe-4S] cluster: Cys-347, Cys-407, and Cys-410.

The protein belongs to the aconitase/IPM isomerase family. LeuC type 1 subfamily. In terms of assembly, heterodimer of LeuC and LeuD. Requires [4Fe-4S] cluster as cofactor.

It catalyses the reaction (2R,3S)-3-isopropylmalate = (2S)-2-isopropylmalate. It participates in amino-acid biosynthesis; L-leucine biosynthesis; L-leucine from 3-methyl-2-oxobutanoate: step 2/4. In terms of biological role, catalyzes the isomerization between 2-isopropylmalate and 3-isopropylmalate, via the formation of 2-isopropylmaleate. The sequence is that of 3-isopropylmalate dehydratase large subunit from Escherichia coli O9:H4 (strain HS).